We begin with the raw amino-acid sequence, 234 residues long: Purine nucleoside phosphorylase DeoD-type (234 aa).

H4 serves as a coordination point for a purine D-ribonucleoside. Phosphate-binding positions include G20, R24, R43, and 87-90 (RIGS). A purine D-ribonucleoside is bound by residues E162, 179–181 (EME), and 203–204 (SD). The active-site Proton donor is D204.

It belongs to the PNP/UDP phosphorylase family. In terms of assembly, homohexamer; trimer of homodimers.

It carries out the reaction a purine D-ribonucleoside + phosphate = a purine nucleobase + alpha-D-ribose 1-phosphate. It catalyses the reaction a purine 2'-deoxy-D-ribonucleoside + phosphate = a purine nucleobase + 2-deoxy-alpha-D-ribose 1-phosphate. Its function is as follows. Catalyzes the reversible phosphorolytic breakdown of the N-glycosidic bond in the beta-(deoxy)ribonucleoside molecules, with the formation of the corresponding free purine bases and pentose-1-phosphate. The chain is Purine nucleoside phosphorylase DeoD-type from Roseobacter denitrificans (strain ATCC 33942 / OCh 114) (Erythrobacter sp. (strain OCh 114)).